A 499-amino-acid chain; its full sequence is Tektin-like protein 1 (499 aa).

2 coiled-coil regions span residues 197–227 and 297–317; these read SMLTWEKEELKSMKRKMERDMEKSEVLLKTL and LNEAKRLLVESKDTLVEMAKN. Tyrosine 372 is subject to Phosphotyrosine.

Microtubule inner protein component of sperm flagellar doublet microtubules.

The protein resides in the cytoplasm. It is found in the cytoskeleton. Its subcellular location is the flagellum axoneme. Functionally, microtubule inner protein (MIP) part of the dynein-decorated doublet microtubules (DMTs) in sperm flagellar axoneme, which is required for motile flagellum beating. Forms an extensive interaction network cross-linking the lumen of axonemal doublet microtubules. This Homo sapiens (Human) protein is Tektin-like protein 1.